The chain runs to 542 residues: Carboxypeptidase Y homolog A (542 aa).

The N-terminal stretch at 1–17 (MRVLPATLLVGAASAAV) is a signal peptide. A propeptide spanning residues 18–123 (PPLQQVLGRP…KLEAYDLRIK (106 aa)) is cleaved from the precursor. 5 disulfide bridges follow: C178–C418, C312–C326, C336–C359, C343–C352, and C381–C388. N209 is a glycosylation site (N-linked (GlcNAc...) asparagine). Residue S265 is part of the active site. Residue D457 is part of the active site. N-linked (GlcNAc...) asparagine glycosylation occurs at N508. Residue H519 is part of the active site.

It belongs to the peptidase S10 family.

The protein localises to the vacuole. The catalysed reaction is Release of a C-terminal amino acid with broad specificity.. Vacuolar carboxypeptidase involved in degradation of small peptides. Digests preferentially peptides containing an aliphatic or hydrophobic residue in P1' position, as well as methionine, leucine or phenylalanine in P1 position of ester substrate. The chain is Carboxypeptidase Y homolog A (cpyA) from Aspergillus oryzae (strain ATCC 42149 / RIB 40) (Yellow koji mold).